The primary structure comprises 678 residues: MAAQRARAPAMRTRGGDAALCAPEDGWVKVHPTPGTMLFREILLGQMGYTEGQGVYNVVRSSEAATRQLQAAIFHALLNATTYRDLEEDWRRHVVARGLQPQRLVRRYRNAREGDIAGVAERVFDTWRCTLRTTLLDFAHGVVDCFAPGGPSGPTSFPKYIDWLTCLGLVPILRKTREGEATQRLGAFLRQHTLPRQLATVAGAAERAGPGLLDLAVAFDSTRMAEYDRVHIYYNHRRGEWLVRDPVSGQRGECLVLCPPLWTGDRLVFDSPVQRLCPEIVACHALREHAHICRLRNTASVKVLLGRKSDSERGVAGAARVVNKALGEDDETKAGSAASRLVRLIINMKGMRHVGDINDTVRAYLDEAGGHLIDTPAVDHTLPGFGKGGTGRGSRPQDPGARPQQLRQAFQTAVVNNINGMLEGYINNLFGTIERLRETNAGLATQLQARDRELRRAQAGALEREQRAADRAAGGGAGRPAEADLLRADYDIIDVSKSMDDDTYVANSFQHQYIPAYGQDLERLSRLWEHELVRCFKILRHRNKQGQETSISYSSGAIASFVAPYFEYVLRAPRAGALITGSDVILGEEELWEAVFKKTRLQTYLTDVAALFVADVQHAALPRPPSPTPADFRASASPRGGSRSRTRTRSRSPGRTPRGAPDQGWGVERRDGRPHARR.

Positions 376–405 (PAVDHTLPGFGKGGTGRGSRPQDPGARPQQ) are disordered. The segment at 422 to 443 (LEGYINNLFGTIERLRETNAGL) is putative leucine zipper motif. Residues 459-470 (AGALEREQRAAD) show a composition bias toward basic and acidic residues. Disordered regions lie at residues 459-480 (AGAL…AGRP) and 622-678 (PRPP…HARR). Residues 642 to 652 (SRSRTRTRSRS) are compositionally biased toward basic residues. Positions 667–678 (VERRDGRPHARR) are enriched in basic and acidic residues.

This sequence belongs to the herpesviridae portal protein family. As to quaternary structure, homododecamerizes. Interacts with terminase subunits TRM1 and TRM3.

It is found in the virion. The protein localises to the host nucleus. Forms a portal in the viral capsid through which viral DNA is translocated during DNA packaging. Assembles as a dodecamer at a single fivefold axe of the T=16 icosahedric capsid. Binds to the molecular motor that translocates the viral DNA, termed terminase. The protein is Portal protein (UL6) of Homo sapiens (Human).